Here is a 100-residue protein sequence, read N- to C-terminus: Cytochrome bo(3) ubiquinol oxidase subunit 4 (100 aa).

The Cytoplasmic portion of the chain corresponds to 1-9 (MLKNRYLKY). Residues 10–32 (LFILILLSILSIMPIFAIIYRIF) traverse the membrane as a helical segment. Residues 33–36 (SRNY) lie on the Extracellular side of the membrane. The helical transmembrane segment at 37 to 59 (LYAFIIVCLFFQILAHIKFFLNL) threads the bilayer. Residues 60 to 68 (DFSLEQRWK) lie on the Cytoplasmic side of the membrane. A helical membrane pass occupies residues 69–90 (LISVIFSLVVGLIILLGSIWVI). Topologically, residues 91–100 (KNLNNNLCIM) are extracellular.

This sequence belongs to the cytochrome c oxidase bacterial subunit 4 family. Heterooctamer of two A chains, two B chains, two C chains and two D chains.

The protein localises to the cell membrane. Functionally, cytochrome bo(3) ubiquinol terminal oxidase is the component of the aerobic respiratory chain of E.coli that predominates when cells are grown at high aeration. Has proton pump activity across the membrane in addition to electron transfer, pumping 2 protons/electron. The protein is Cytochrome bo(3) ubiquinol oxidase subunit 4 (cyoD) of Buchnera aphidicola subsp. Baizongia pistaciae (strain Bp).